A 146-amino-acid polypeptide reads, in one-letter code: 3-hydroxyacyl-[acyl-carrier-protein] dehydratase FabZ (146 aa).

H48 is a catalytic residue.

This sequence belongs to the thioester dehydratase family. FabZ subfamily.

It is found in the cytoplasm. The catalysed reaction is a (3R)-hydroxyacyl-[ACP] = a (2E)-enoyl-[ACP] + H2O. Involved in unsaturated fatty acids biosynthesis. Catalyzes the dehydration of short chain beta-hydroxyacyl-ACPs and long chain saturated and unsaturated beta-hydroxyacyl-ACPs. This chain is 3-hydroxyacyl-[acyl-carrier-protein] dehydratase FabZ, found in Paracidovorax citrulli (strain AAC00-1) (Acidovorax citrulli).